The primary structure comprises 1357 residues: MAYSYTEKKRIRKNFGKLPQVMDAPYLLSIQVDSYRTFLQDGKSPKNREDIGLQAAFRSVFPIESYSGNAALEFVEYSLGKPEFDVRECILRGSTYAAPMRVKIRLIIKDRETKSIKDVREQEVYMGEIPLMTENGTFVINGTERVIVSQLHRSPGVFFDHDKGKTHSSGKVLYSARIIPYRGSWLDFEFDAKDLVYVRIDRRRKLLATVVLRALGYNNEQILNLFYEKVPVYLDMGSYQIDLVPERLRGEMAQFDITDNEGKVIVEQGKRINARHVRQMEAAGLTKLSVPDEYLYERITAEDITLRDGEVIAANTLLSHEVMVKLAEGGVKQFNILFTNDIDRGSFVADTLRADLTRDREEALVEIYKVMRPGEPPTKEAAENLFNNLFFSSERYDLSPVGRMKFNRRLGRPYEVGTDQKSREVEGILSHEDIIDVLRTLVEIRNGKGEVDDIDHLGNRRVRSVGEMTENQFRVGLVRVERAVKERLSQAETDNLSPQDLINAKPVAAAIKEFFGSSQLSQFMDQNNPLSEITHKRRVSALGPGGLTRERAGFEVRDVHQTHYGRVCPIETPEGPNIGLINSLSVYAKANDFGFLETPYRKVIDGRVTDDVEYLSAIEEVGTVIAQADSAVDKDGNLTEEFVSVRHQGEFVRMPPEKVTHMDVSAQQVVSVAASLIPFLEHDDANRALMGSNMQRQAVPTLRADKPLVGTGMEANVARDSGVCVIANRGGVIEYVDASRIVIRVNEDEMVAGEAGVDIYNLIKYTRSNQNTCINQNVIVNLGDKVARGDILADGPSTDMGELALGQNMRVAFMTWNGYNYEDSILLSERVLQEDRLTSIHIQELSCVARDTKLGAEEITADIPNVGEAALSKLDESGIVYIGAEVTAGDILVGKVTPKGETQLTPEEKLLRAIFGEKAADVKDSSLRVPSGTKGTVIDVQVFTRDGLEKDDRALAIEKAQLDSYRKDLKEEYKIFEEAARERVIRLLKGQESNGGGSTKRGDKLSEDLLSGLELVDLLEIQPADEAIAERLTQIQVFLKEKSAEIDEKFAEKKRKLATGDELTTGVLKVVKVYLAVKRRIQPGDKMAGRHGNKGVVSNILPVEDMPHDANGVPVDIVLNPLGVPSRMNVGQILETHLGMAAKGLGDKIEKMLKEQRTVLELREFLDKIYNKVGGEQEDLDSLTDEEILALAGNLRAGVPLATPVFDGAEESQIKDLLELADISRTGQTVLFDGRTGEQFDRPVTVGYMYMLKLNHLVDDKMHARSTGSYSLVTQQPLGGKAQFGGQRFGEMEVWALEAYGAAYTLQEMLTVKSDDVEGRTRIYKNIVDGNHYMDPGMPESFNVLTKEIRSLGINID.

It belongs to the RNA polymerase beta chain family. As to quaternary structure, the RNAP catalytic core consists of 2 alpha, 1 beta, 1 beta' and 1 omega subunit. When a sigma factor is associated with the core the holoenzyme is formed, which can initiate transcription.

It carries out the reaction RNA(n) + a ribonucleoside 5'-triphosphate = RNA(n+1) + diphosphate. In terms of biological role, DNA-dependent RNA polymerase catalyzes the transcription of DNA into RNA using the four ribonucleoside triphosphates as substrates. This Acinetobacter baumannii (strain ATCC 17978 / DSM 105126 / CIP 53.77 / LMG 1025 / NCDC KC755 / 5377) protein is DNA-directed RNA polymerase subunit beta.